A 95-amino-acid chain; its full sequence is Aspartyl/glutamyl-tRNA(Asn/Gln) amidotransferase subunit C (95 aa).

Belongs to the GatC family. As to quaternary structure, heterotrimer of A, B and C subunits.

It catalyses the reaction L-glutamyl-tRNA(Gln) + L-glutamine + ATP + H2O = L-glutaminyl-tRNA(Gln) + L-glutamate + ADP + phosphate + H(+). It carries out the reaction L-aspartyl-tRNA(Asn) + L-glutamine + ATP + H2O = L-asparaginyl-tRNA(Asn) + L-glutamate + ADP + phosphate + 2 H(+). Allows the formation of correctly charged Asn-tRNA(Asn) or Gln-tRNA(Gln) through the transamidation of misacylated Asp-tRNA(Asn) or Glu-tRNA(Gln) in organisms which lack either or both of asparaginyl-tRNA or glutaminyl-tRNA synthetases. The reaction takes place in the presence of glutamine and ATP through an activated phospho-Asp-tRNA(Asn) or phospho-Glu-tRNA(Gln). The chain is Aspartyl/glutamyl-tRNA(Asn/Gln) amidotransferase subunit C from Prochlorococcus marinus (strain NATL1A).